The following is a 492-amino-acid chain: MLEVGTIWGFTSTTMASIMFLWPMYKQFVPYQLREYLENTIQKYLDKLFRRDSNFVYIRFPEYTGEGLSKSRAYDEIGNYLSSISTARAKRLKAKESENSKSLVLCLDDDEAVVVVFQGVNVVWSSTVVDKEDKHNSKEGRYLTLTFENHHRDIITNTYIDHVLREGKEIALKNRERKLYTNNDSSSYSSWWEGLWSNVPFNHHASFETLGMDLDKKEEIKKDLIKFTKGKDYYRKVAKPWKRGYLLFGPPGTGKSTMISAIANFLEYDVYDLELTTVKDNAELKKLMLDTKGKSIVVIEDIDCSLELTEHRKKKKEEDEDKEEKKEAENLKRVSGNNESNVTLSGLLNAIDGLWSACSDEKIIIFTTNFVDNLDPALIRRGRMDYHIEMSYCRFEAFKVLAKNYLENESHDLYGEIGRLLEEVDVSPADVAENLMPKSDEDDADICFRRLVKSLEEEKKKKIEKEARKNKKKAEDNVKQEKQNKVKGMVTK.

The helical transmembrane segment at 7-25 threads the bilayer; the sequence is IWGFTSTTMASIMFLWPMY. 249–256 is a binding site for ATP; the sequence is GPPGTGKS. 2 disordered regions span residues 313-334 and 462-492; these read KKKK…LKRV and KIEK…MVTK. 2 stretches are compositionally biased toward basic and acidic residues: residues 323 to 332 and 462 to 484; these read EEKKEAENLK and KIEK…EKQN.

It belongs to the AAA ATPase family. BCS1 subfamily. Mg(2+) serves as cofactor.

The protein resides in the membrane. The catalysed reaction is ATP + H2O = ADP + phosphate + H(+). The sequence is that of AAA-ATPase At3g28520 from Arabidopsis thaliana (Mouse-ear cress).